A 135-amino-acid polypeptide reads, in one-letter code: Congerin-1 (135 aa).

S1 bears the N-acetylserine mark. The Galectin domain maps to G3 to E135. An a beta-D-galactoside-binding site is contributed by W70–S76.

As to quaternary structure, homodimer.

Its function is as follows. This protein binds beta-galactoside. Its physiological function is not yet known. This is Congerin-1 from Conger myriaster (Conger eel).